A 430-amino-acid polypeptide reads, in one-letter code: Retinoic acid receptor RXR-alpha-A (430 aa).

Low complexity predominate over residues 1–20; the sequence is MHPSLLSPTSLGPSGSLHSP. 2 disordered regions span residues 1–25 and 48–73; these read MHPS…STLS and ASPG…SSSE. The modulating stretch occupies residues 1 to 99; sequence MHPSLLSPTS…QPSGTPLSLT (99 aa). The segment covering 58 to 72 has biased composition (polar residues); the sequence is ISPQLNSHMNSVSSS. A DNA-binding region (nuclear receptor) is located at residues 100 to 175; sequence KHICAICGDR…MGMKREAVQE (76 aa). 4 residues coordinate Zn(2+): C103, C106, C120, and C123. The NR C4-type zinc-finger motif lies at 103 to 123; sequence CAICGDRSSGKHYGVYSCEGC. Positions 128–133 are nuclear localization signal; it reads KRTVRK. 4 residues coordinate Zn(2+): C139, C145, C155, and C158. The NR C4-type zinc finger occupies 139–158; it reads CRDNKDCVIDKRQRNRCQYC. Positions 174–186 are enriched in basic and acidic residues; sequence QEERQRAKERSEN. The interval 174-196 is disordered; sequence QEERQRAKERSENEVESTSSANE. Residues 176–192 are hinge; that stretch reads ERQRAKERSENEVESTS. In terms of domain architecture, NR LBD spans 195 to 426; the sequence is NEDMPVEKIL…TFLMEMLEAP (232 aa). 2 residues coordinate 9-cis-retinoate: R284 and A295. R284 and A295 together coordinate all-trans-retinoate. The segment at 316 to 336 is required for nuclear export; sequence RVLTELVSKMRDMQMDKTELG. The AF-2 stretch occupies residues 415 to 426; sequence IDTFLMEMLEAP.

Belongs to the nuclear hormone receptor family. NR2 subfamily. Homodimer. Heterodimer; with a rar molecule. Binds DNA preferentially as a rar/rxr heterodimer.

It is found in the nucleus. Receptor for retinoic acid that acts as a transcription factor. Forms homo- or heterodimers with retinoic acid receptors (rars) and binds to target response elements in response to their ligands, all-trans or 9-cis retinoic acid, to regulate gene expression in various biological processes. The rar/rxr heterodimers bind to the retinoic acid response elements (RARE) composed of tandem 5'-AGGTCA-3' sites known as DR1-DR5 to regulate transcription. The high affinity ligand for rxrs is 9-cis retinoic acid. In the absence of ligand, the rar/rxr heterodimers associate with a multiprotein complex containing transcription corepressors that induce histone deacetylation, chromatin condensation and transcriptional suppression. On ligand binding, the corepressors dissociate from the receptors and coactivators are recruited leading to transcriptional activation. This Danio rerio (Zebrafish) protein is Retinoic acid receptor RXR-alpha-A.